A 394-amino-acid polypeptide reads, in one-letter code: Tryptophan synthase beta chain (394 aa).

The residue at position 90 (K90) is an N6-(pyridoxal phosphate)lysine.

It belongs to the TrpB family. In terms of assembly, tetramer of two alpha and two beta chains. It depends on pyridoxal 5'-phosphate as a cofactor.

The catalysed reaction is (1S,2R)-1-C-(indol-3-yl)glycerol 3-phosphate + L-serine = D-glyceraldehyde 3-phosphate + L-tryptophan + H2O. It functions in the pathway amino-acid biosynthesis; L-tryptophan biosynthesis; L-tryptophan from chorismate: step 5/5. Its function is as follows. The beta subunit is responsible for the synthesis of L-tryptophan from indole and L-serine. The chain is Tryptophan synthase beta chain from Parabacteroides distasonis (strain ATCC 8503 / DSM 20701 / CIP 104284 / JCM 5825 / NCTC 11152).